A 228-amino-acid polypeptide reads, in one-letter code: Large ribosomal subunit protein uL3 (228 aa).

The disordered stretch occupies residues 157-176 (CHRHAGGTGMSASPSRTFKG).

The protein belongs to the universal ribosomal protein uL3 family. In terms of assembly, part of the 50S ribosomal subunit. Forms a cluster with proteins L14 and L19.

In terms of biological role, one of the primary rRNA binding proteins, it binds directly near the 3'-end of the 23S rRNA, where it nucleates assembly of the 50S subunit. In Rhodopirellula baltica (strain DSM 10527 / NCIMB 13988 / SH1), this protein is Large ribosomal subunit protein uL3.